The following is a 142-amino-acid chain: Large ribosomal subunit protein uL11 (142 aa).

It belongs to the universal ribosomal protein uL11 family. In terms of assembly, part of the ribosomal stalk of the 50S ribosomal subunit. Interacts with L10 and the large rRNA to form the base of the stalk. L10 forms an elongated spine to which L12 dimers bind in a sequential fashion forming a multimeric L10(L12)X complex. One or more lysine residues are methylated.

Forms part of the ribosomal stalk which helps the ribosome interact with GTP-bound translation factors. This chain is Large ribosomal subunit protein uL11, found in Pseudoalteromonas translucida (strain TAC 125).